The primary structure comprises 300 residues: MTTVGFDVAARLGTLLTAMVTPFSGDGSLDTATAARLANHLVDQGCDGLVVSGTTGESPTTTDGEKIELLRAVLEAVGDRARVIAGAGTYDTAHSIRLAKACAAEGAHGLLVVTPYYSKPPQRGLQAHFTAVADATELPMLLYDIPGRSAVPIEPDTIRALASHPNIVGVKDAKADLHSGAQIMADTGLAYYSGDDALNLPWLAMGATGFISVIAHLAAGQLRELLSAFGSGDIATARKINIAVAPLCNAMSRLGGVTLSKAGLRLQGIDVGDPRLPQVAATPEQIDALAADMRAASVLR.

Residue Thr-55 participates in pyruvate binding. The active-site Proton donor/acceptor is Tyr-143. Catalysis depends on Lys-171, which acts as the Schiff-base intermediate with substrate. A pyruvate-binding site is contributed by Ile-211.

This sequence belongs to the DapA family. Homotetramer; dimer of dimers.

Its subcellular location is the cytoplasm. The enzyme catalyses L-aspartate 4-semialdehyde + pyruvate = (2S,4S)-4-hydroxy-2,3,4,5-tetrahydrodipicolinate + H2O + H(+). It functions in the pathway amino-acid biosynthesis; L-lysine biosynthesis via DAP pathway; (S)-tetrahydrodipicolinate from L-aspartate: step 3/4. Catalyzes the condensation of (S)-aspartate-beta-semialdehyde [(S)-ASA] and pyruvate to 4-hydroxy-tetrahydrodipicolinate (HTPA). This chain is 4-hydroxy-tetrahydrodipicolinate synthase, found in Mycobacterium bovis (strain ATCC BAA-935 / AF2122/97).